The following is a 929-amino-acid chain: Isoleucine--tRNA ligase (929 aa).

A 'HIGH' region motif is present at residues P58 to H68. Residue E563 coordinates L-isoleucyl-5'-AMP. A 'KMSKS' region motif is present at residues K605 to S609. Position 608 (K608) interacts with ATP. C892, C895, C912, and C915 together coordinate Zn(2+).

This sequence belongs to the class-I aminoacyl-tRNA synthetase family. IleS type 1 subfamily. In terms of assembly, monomer. Requires Zn(2+) as cofactor.

It is found in the cytoplasm. The catalysed reaction is tRNA(Ile) + L-isoleucine + ATP = L-isoleucyl-tRNA(Ile) + AMP + diphosphate. In terms of biological role, catalyzes the attachment of isoleucine to tRNA(Ile). As IleRS can inadvertently accommodate and process structurally similar amino acids such as valine, to avoid such errors it has two additional distinct tRNA(Ile)-dependent editing activities. One activity is designated as 'pretransfer' editing and involves the hydrolysis of activated Val-AMP. The other activity is designated 'posttransfer' editing and involves deacylation of mischarged Val-tRNA(Ile). This Neisseria meningitidis serogroup B (strain ATCC BAA-335 / MC58) protein is Isoleucine--tRNA ligase.